We begin with the raw amino-acid sequence, 132 residues long: Small ribosomal subunit protein uS8c (132 aa).

It belongs to the universal ribosomal protein uS8 family. In terms of assembly, part of the 30S ribosomal subunit.

It is found in the plastid. The protein resides in the chloroplast. One of the primary rRNA binding proteins, it binds directly to 16S rRNA central domain where it helps coordinate assembly of the platform of the 30S subunit. This chain is Small ribosomal subunit protein uS8c (rps8), found in Liriodendron tulipifera (Tuliptree).